A 259-amino-acid chain; its full sequence is Small ribosomal subunit protein uS2 (259 aa).

The tract at residues 234 to 259 (VAEDSEEVSTVDADAITAEDFETEEV) is disordered. Acidic residues predominate over residues 250-259 (TAEDFETEEV).

This sequence belongs to the universal ribosomal protein uS2 family.

This is Small ribosomal subunit protein uS2 from Sulfurimonas denitrificans (strain ATCC 33889 / DSM 1251) (Thiomicrospira denitrificans (strain ATCC 33889 / DSM 1251)).